The primary structure comprises 204 residues: Facilitator of iron transport 3 (204 aa).

Positions 1-18 (MKFSSALVLSAVAATALA) are cleaved as a signal peptide. Disordered stretches follow at residues 84–104 (SAAE…SGSS) and 133–175 (EGSS…SSTA). Residues 135 to 175 (SSNTWSPSSTSTSSEAATSSASTTATTTAETSSSATSSSTA) show a composition bias toward low complexity. Gly182 carries GPI-anchor amidated glycine lipidation. Residues 183–204 (AADAITAGTGLMGAALAAVMLL) constitute a propeptide, removed in mature form.

Post-translationally, the GPI-anchor is attached to the protein in the endoplasmic reticulum and serves to target the protein to the cell surface. There, the glucosamine-inositol phospholipid moiety is cleaved off and the GPI-modified mannoprotein is covalently attached via its lipidless GPI glycan remnant to the 1,6-beta-glucan of the outer cell wall layer.

Its subcellular location is the secreted. It localises to the cell wall. The protein resides in the membrane. In terms of biological role, involved in the uptake of non-siderophore and siderophore sources of iron. Has a role in the retention of iron in the cell wall and periplasmic space. The sequence is that of Facilitator of iron transport 3 (FIT3) from Saccharomyces cerevisiae (strain ATCC 204508 / S288c) (Baker's yeast).